A 285-amino-acid chain; its full sequence is Hydroxyacylglutathione hydrolase, mitochondrial (285 aa).

Residues 1–10 (MKFLLQQIRN) constitute a mitochondrion transit peptide. 7 residues coordinate Zn(2+): His69, His71, Asp73, His74, His131, Asp154, and His198.

Requires Zn(2+) as cofactor.

Its subcellular location is the mitochondrion matrix. The enzyme catalyses an S-(2-hydroxyacyl)glutathione + H2O = a 2-hydroxy carboxylate + glutathione + H(+). It carries out the reaction (R)-S-lactoylglutathione + H2O = (R)-lactate + glutathione + H(+). It functions in the pathway secondary metabolite metabolism; methylglyoxal degradation; (R)-lactate from methylglyoxal: step 2/2. With respect to regulation, inhibited by various thiol compounds such as glutathione and coenzyme A. Thiolesterase that catalyzes the hydrolysis of S-D-lactoylglutathione to form glutathione and D-lactic acid. Involved in the metabolism of methylglyoxal, a toxic compound for yeast proliferation, by converting methylglyoxal to lactate via S-D-lactoylglutathione by sequential enzyme reactions catalyzed by glyoxalase I and glyoxalase II. This chain is Hydroxyacylglutathione hydrolase, mitochondrial, found in Saccharomyces cerevisiae (strain ATCC 204508 / S288c) (Baker's yeast).